A 550-amino-acid chain; its full sequence is MQKGPCGTELGRLSSKQNMDSAQPTKLDFLTVPATPFSIGVLASIVVLVTVVIGPKAVIDTVLNSYLSLVHRIPAADGKKYMSGPAYTFPNGQMVDKFLAARTRSWEWEEKYGKTYRIWAASIPEVVITDPKDVEVLYQQSTDHNKAPQANAGWLLTQLLGSGLGLINGTRWSTLRKTLDPMFSHRAALQYLRDSLDAGAQDYVAGIHQFAKADGQVQTADGKVMVINATQALQRYPFFEVASMFYGKMSEAEHERLWDLGRRYSEVFAAIVSGGIHRSKLTRYLNTKAWNNARDYQKAWRDFNREIYTARKMTAPDTPIVALTEAAERGELTPNEVTDTIAESTFANLDIVTHVISSCIILLADSPEVQNDLLQEMEKNKADRENYITRKDTLLHYCLLESLRLRPVLCLKEYWLTQVKAFTFPENPPREKILGNFVVPKDTTIIVDAFAINIRNPFWGPDNRAYRPSRFAGIKQSQLRYNLATFGYGPRKCLGQHIADKIVKAVVYHLFSKYRVSLMPMQAVEGDFKVDKTSWVALYDVDLKLEPRES.

Residues 39–59 (IGVLASIVVLVTVVIGPKAVI) form a helical membrane-spanning segment. Residue Cys493 coordinates heme.

Belongs to the cytochrome P450 family. Requires heme as cofactor.

It localises to the membrane. The protein operates within secondary metabolite biosynthesis. In terms of biological role, cytochrome P450 monooxygenase; part of the gene cluster that mediates the biosynthesis of hexadehydro-astechrome (HAS), a tryptophan-derived iron(III)-complex that acts as a virulence factor in infected mice. Within the pathway, hasH, with the O-methyltransferase hasC and the FAD-linked oxidoreductase hasG, convert the hasE-prenylated Trp-Ala dipeptide into an O-methylated diketopiperazine that is then released from the hasD NRPS. The HAS biosynthesis begins with the synthesis of a tethered Trp-Ala dipeptide by the NRPS hasD. The 7-dimethylallyltryptophan synthase hasE then catalyzes the prenylation of the hasD-tethered tryptophan or the resulting tethered Trp-Ala dipeptide at the C-7 position of the indole moiety. HAS biosynthesis continues via tethered intermediates with the succesive action of the cytochrome P450 monooxygenase hasH, the O-methyltransferase hasC, and the FAD-linked oxidoreductase hasG. The resulting O-methylated diketopiperazine is then released from hasD. Finally, three O-methylated diketopiperazine molecules assemble in a trimeric complex with Fe(III) to produce hexadehydro-astechrome. In Aspergillus fumigatus (strain CBS 144.89 / FGSC A1163 / CEA10) (Neosartorya fumigata), this protein is Cytochrome P450 monooxygenase hasH.